The primary structure comprises 209 residues: Ribosomal RNA large subunit methyltransferase E (209 aa).

Residues Gly-60, Trp-62, Asp-80, Asp-96, and Asp-121 each coordinate S-adenosyl-L-methionine. Catalysis depends on Lys-161, which acts as the Proton acceptor.

It belongs to the class I-like SAM-binding methyltransferase superfamily. RNA methyltransferase RlmE family.

The protein resides in the cytoplasm. It catalyses the reaction uridine(2552) in 23S rRNA + S-adenosyl-L-methionine = 2'-O-methyluridine(2552) in 23S rRNA + S-adenosyl-L-homocysteine + H(+). Specifically methylates the uridine in position 2552 of 23S rRNA at the 2'-O position of the ribose in the fully assembled 50S ribosomal subunit. The protein is Ribosomal RNA large subunit methyltransferase E of Pseudomonas fluorescens (strain Pf0-1).